The sequence spans 209 residues: Uracil phosphoribosyltransferase (209 aa).

Residues Arg79, Arg104, and 131-139 (TPVVATANT) each bind 5-phospho-alpha-D-ribose 1-diphosphate. Residues Ile194 and 199 to 201 (GDA) contribute to the uracil site. Asp200 is a binding site for 5-phospho-alpha-D-ribose 1-diphosphate.

The protein belongs to the UPRTase family. It depends on Mg(2+) as a cofactor.

The catalysed reaction is UMP + diphosphate = 5-phospho-alpha-D-ribose 1-diphosphate + uracil. The protein operates within pyrimidine metabolism; UMP biosynthesis via salvage pathway; UMP from uracil: step 1/1. Its activity is regulated as follows. Allosterically activated by GTP. Catalyzes the conversion of uracil and 5-phospho-alpha-D-ribose 1-diphosphate (PRPP) to UMP and diphosphate. This Bradyrhizobium diazoefficiens (strain JCM 10833 / BCRC 13528 / IAM 13628 / NBRC 14792 / USDA 110) protein is Uracil phosphoribosyltransferase.